We begin with the raw amino-acid sequence, 569 residues long: Endonuclease/exonuclease/phosphatase family domain-containing protein 1 (569 aa).

Gly2 is lipidated: N-myristoyl glycine. Phosphoserine occurs at positions 16 and 25. The HhH domain maps to Glu38–Tyr67. Phosphoserine occurs at positions 106, 110, 160, and 173. Positions Ser200–Leu224 are disordered. Residues Pro202 to Leu211 are compositionally biased toward polar residues. At Thr265 the chain carries Phosphothreonine. The segment at Val549–Arg569 is disordered.

This is Endonuclease/exonuclease/phosphatase family domain-containing protein 1 (Eepd1) from Mus musculus (Mouse).